An 815-amino-acid chain; its full sequence is Serotype-specific mannosyltransferase WbdA (815 aa).

The interval 1–374 is alpha-(1-&gt;2)-mannosyltransferase; that stretch reads MSRAIIENAG…WANTAHLAIE (374 aa). Residues 431–804 form an alpha-(1-&gt;3)-mannosyltransferase region; it reads KLLVDISVLA…WKQSAEFLLK (374 aa).

It belongs to the glycosyltransferase group 1 family. Glycosyltransferase 4 subfamily. As to quaternary structure, monomer. Interacts with the C-terminal region of WbdD.

Its subcellular location is the cell inner membrane. The catalysed reaction is [alpha-D-Man-(1-&gt;3)-alpha-D-Man-(1-&gt;3)-alpha-D-Man-(1-&gt;2)-alpha-D-Man-(1-&gt;2)](n)-alpha-D-Man-(1-&gt;3)-alpha-D-Man-(1-&gt;3)-alpha-D-Man-(1-&gt;3)-alpha-D-GlcNAc-di-trans,octa-cis-undecaprenyl diphosphate + 2 GDP-alpha-D-mannose = alpha-D-Man-(1-&gt;2)-alpha-D-Man-(1-&gt;2)-[alpha-D-Man-(1-&gt;3)-alpha-D-Man-(1-&gt;3)-alpha-D-Man-(1-&gt;2)-alpha-D-Man-(1-&gt;2)](n)-alpha-D-Man-(1-&gt;3)-alpha-D-Man-(1-&gt;3)-alpha-D-Man-(1-&gt;3)-alpha-D-GlcNAc-di-trans,octa-cis-undecaprenyl diphosphate + 2 GDP + 2 H(+). It catalyses the reaction alpha-D-Man-(1-&gt;2)-alpha-D-Man-(1-&gt;2)-[alpha-D-Man-(1-&gt;3)-alpha-D-Man-(1-&gt;3)-alpha-D-Man-(1-&gt;2)-alpha-D-Man-(1-&gt;2)](n)-alpha-D-Man-(1-&gt;3)-alpha-D-Man-(1-&gt;3)-alpha-D-Man-(1-&gt;3)-alpha-D-GlcNAc-di-trans,octa-cis-undecaprenyl diphosphate + 2 GDP-alpha-D-mannose = [alpha-D-Man-(1-&gt;3)-alpha-D-Man-(1-&gt;3)-alpha-D-Man-(1-&gt;2)-alpha-D-Man-(1-&gt;2)](n+1)-alpha-D-Man-(1-&gt;3)-alpha-D-Man-(1-&gt;3)-alpha-D-Man-(1-&gt;3)-alpha-D-GlcNAc-di-trans,octa-cis-undecaprenyl diphosphate + 2 GDP + 2 H(+). Its pathway is bacterial outer membrane biogenesis; LPS O-antigen biosynthesis. Its function is as follows. Mannosyltransferase involved in the biosynthesis of the repeat unit of the lipopolysaccharide (LPS) O-antigen region. Catalyzes the polymerization of a tetrasaccharide repeat unit containing two alpha-(1-&gt;3)- and two alpha-(1-&gt;2)-linked mannopyranose residues. The protein is Serotype-specific mannosyltransferase WbdA of Escherichia coli.